We begin with the raw amino-acid sequence, 202 residues long: Large ribosomal subunit protein bL25 (202 aa).

Belongs to the bacterial ribosomal protein bL25 family. CTC subfamily. Part of the 50S ribosomal subunit; part of the 5S rRNA/L5/L18/L25 subcomplex. Contacts the 5S rRNA. Binds to the 5S rRNA independently of L5 and L18.

This is one of the proteins that binds to the 5S RNA in the ribosome where it forms part of the central protuberance. The polypeptide is Large ribosomal subunit protein bL25 (Paramagnetospirillum magneticum (strain ATCC 700264 / AMB-1) (Magnetospirillum magneticum)).